Reading from the N-terminus, the 1234-residue chain is ATP-dependent helicase/nuclease subunit A (1234 aa).

Positions 2–475 (TQFTTSQQAA…IILAENFRST (474 aa)) constitute a UvrD-like helicase ATP-binding domain. Residue 23 to 30 (ASAGSGKT) participates in ATP binding. In terms of domain architecture, UvrD-like helicase C-terminal spans 507-806 (YGALDYGDAH…KLMTIHKSKG (300 aa)).

The protein belongs to the helicase family. AddA subfamily. Heterodimer of AddA and AddB/RexB. Mg(2+) is required as a cofactor.

The enzyme catalyses Couples ATP hydrolysis with the unwinding of duplex DNA by translocating in the 3'-5' direction.. It catalyses the reaction ATP + H2O = ADP + phosphate + H(+). Its function is as follows. The heterodimer acts as both an ATP-dependent DNA helicase and an ATP-dependent, dual-direction single-stranded exonuclease. Recognizes the chi site generating a DNA molecule suitable for the initiation of homologous recombination. The AddA nuclease domain is required for chi fragment generation; this subunit has the helicase and 3' -&gt; 5' nuclease activities. In Lacticaseibacillus paracasei (strain ATCC 334 / BCRC 17002 / CCUG 31169 / CIP 107868 / KCTC 3260 / NRRL B-441) (Lactobacillus paracasei), this protein is ATP-dependent helicase/nuclease subunit A.